Consider the following 310-residue polypeptide: p-hydroxybenzoic acid efflux pump subunit AaeA (310 aa).

The chain crosses the membrane as a helical span at residues 12–32 (AITVVLVILAFIAIFNAWVYY).

It belongs to the membrane fusion protein (MFP) (TC 8.A.1) family.

It is found in the cell inner membrane. In terms of biological role, forms an efflux pump with AaeB. The chain is p-hydroxybenzoic acid efflux pump subunit AaeA from Shigella flexneri.